The following is a 187-amino-acid chain: Elongation factor P (187 aa).

It belongs to the elongation factor P family.

The protein resides in the cytoplasm. Its pathway is protein biosynthesis; polypeptide chain elongation. Functionally, involved in peptide bond synthesis. Stimulates efficient translation and peptide-bond synthesis on native or reconstituted 70S ribosomes in vitro. Probably functions indirectly by altering the affinity of the ribosome for aminoacyl-tRNA, thus increasing their reactivity as acceptors for peptidyl transferase. This Mycolicibacterium gilvum (strain PYR-GCK) (Mycobacterium gilvum (strain PYR-GCK)) protein is Elongation factor P.